The following is a 182-amino-acid chain: Guanylate kinase (182 aa).

Residues glycine 2–glycine 180 form the Guanylate kinase-like domain. Glycine 9–glycine 16 is a binding site for ATP.

Belongs to the guanylate kinase family.

The protein resides in the cytoplasm. The catalysed reaction is GMP + ATP = GDP + ADP. It carries out the reaction dZMP + ATP = dZDP + ADP. It participates in purine metabolism. Functionally, essential for recycling GMP and indirectly, cGMP. (Microbial infection) Catalyzes the phosphorylation of dZMP to dZDP, when the bacterium is infected by a phage that produces the substrate for the synthesis of dZTP (2- amino-2'-deoxyadenosine 5'-triphosphate), which is then used by the phage as a DNA polymerase substrate. This is Guanylate kinase from Parasynechococcus marenigrum (strain WH8102).